The chain runs to 377 residues: UDP-N-acetylglucosamine 2-epimerase (377 aa).

His212 is an active-site residue.

Belongs to the UDP-N-acetylglucosamine 2-epimerase family. As to quaternary structure, homodimer.

It catalyses the reaction UDP-N-acetyl-alpha-D-glucosamine + H2O = aldehydo-N-acetyl-D-mannosamine + UDP + H(+). Its function is as follows. Catalyzes the conversion of UDP-N-acetylglucosamine (UDP-GlcNAc) to UDP and N-acetyl-D-mannosamine (ManNAc). This Neisseria meningitidis serogroup B (strain ATCC BAA-335 / MC58) protein is UDP-N-acetylglucosamine 2-epimerase (siaA).